A 403-amino-acid chain; its full sequence is Phosphoglycerate kinase (403 aa).

Substrate is bound by residues Asp21–Asn23, Arg36, His59–Arg62, Arg118, and Arg151. ATP is bound by residues Lys202, Glu328, and Gly354 to Ser357.

The protein belongs to the phosphoglycerate kinase family. In terms of assembly, monomer.

It localises to the cytoplasm. The enzyme catalyses (2R)-3-phosphoglycerate + ATP = (2R)-3-phospho-glyceroyl phosphate + ADP. Its pathway is carbohydrate degradation; glycolysis; pyruvate from D-glyceraldehyde 3-phosphate: step 2/5. The protein is Phosphoglycerate kinase of Akkermansia muciniphila (strain ATCC BAA-835 / DSM 22959 / JCM 33894 / BCRC 81048 / CCUG 64013 / CIP 107961 / Muc).